Here is a 508-residue protein sequence, read N- to C-terminus: MASLFRPPESAKCNPNSPRLKLPLLRNNQVDENNIYLTSNGSSTTAYSSHTPEPLTSSTSTLFSQTRLHPSDSSMTLNTMKKRPAPPSLPSLSINSQSKCKTLPELVPIADVSDGKHDLGLKQRVIAENELSGNSDLTPSSMASPFSHTNTSSPYLRNDLSNSVGSDFSNLISAYEQSSSPIKSSSQPKSSSESYIDLNSVRDVDQLDENGWKYANLKDRIETLGILGEGAGGSVSKCKLKNGSKIFALKVINTLNTDPEYQKQIFRELQFNRSFQSEYIVRYYGMFTDDENSSIYIAMEYMGGRSLDAIYKNLLERGGRISEKVLGKIAEAVLRGLSYLHEKKVIHRDIKPQNILLNENGQVKLCDFGVSGEAVNSLATTFTGTSFYMAPERIQGQPYSVTSDVWSLGLTILEVANGKFPCSSEKMAANIAPFELLMWILTFTPELKDEPESNIIWSPSFKSFIDYCLKKDSRERPSPRQMINHPWIKGQMKKNVNMEKFVRKCWKD.

Disordered regions lie at residues 1–21 (MASLFRPPESAKCNPNSPRLK), 35–95 (IYLT…LSIN), and 130–158 (ELSGNSDLTPSSMASPFSHTNTSSPYLRN). Polar residues predominate over residues 35–47 (IYLTSNGSSTTAY). Residues 48 to 66 (SSHTPEPLTSSTSTLFSQT) are compositionally biased toward low complexity. Composition is skewed to polar residues over residues 67–79 (RLHPSDSSMTLNT) and 131–158 (LSGNSDLTPSSMASPFSHTNTSSPYLRN). Serine 192 carries the phosphoserine modification. The Protein kinase domain occupies 221–488 (IETLGILGEG…PRQMINHPWI (268 aa)). ATP is bound by residues 227 to 235 (LGEGAGGSV) and lysine 250. Aspartate 349 serves as the catalytic Proton acceptor.

The protein belongs to the protein kinase superfamily. STE Ser/Thr protein kinase family. MAP kinase kinase subfamily.

The catalysed reaction is L-seryl-[protein] + ATP = O-phospho-L-seryl-[protein] + ADP + H(+). It carries out the reaction L-threonyl-[protein] + ATP = O-phospho-L-threonyl-[protein] + ADP + H(+). The enzyme catalyses L-tyrosyl-[protein] + ATP = O-phospho-L-tyrosyl-[protein] + ADP + H(+). Involved in a signal transduction pathway that play a role in yeast cell morphogenesis and cell growth. This pathway seems to start by SMP3; then involve the kinase PKC1 that may act on the BCK1 kinase that then phosphorylates MKK1 and MKK2 which themselves phosphorylate the MPK1 kinase. In Saccharomyces cerevisiae (strain ATCC 204508 / S288c) (Baker's yeast), this protein is MAP kinase kinase MKK1/SSP32 (MKK1).